Reading from the N-terminus, the 186-residue chain is Ribosome-recycling factor (186 aa).

It belongs to the RRF family.

It is found in the cytoplasm. Responsible for the release of ribosomes from messenger RNA at the termination of protein biosynthesis. May increase the efficiency of translation by recycling ribosomes from one round of translation to another. The protein is Ribosome-recycling factor of Burkholderia lata (strain ATCC 17760 / DSM 23089 / LMG 22485 / NCIMB 9086 / R18194 / 383).